The primary structure comprises 55 residues: Ovomucoid (55 aa).

Positions 5 to 55 constitute a Kazal-like domain; the sequence is VDCSEHPKPACTLDYRPICGSDSKTYSNKCDFCNAVMDSNGTLTLSHFGKC. 3 disulfide bridges follow: C7–C37, C15–C34, and C23–C55. N44 is a glycosylation site (N-linked (GlcNAc...) asparagine).

The protein resides in the secreted. The protein is Ovomucoid of Dacelo novaeguineae (Laughing kookaburra).